A 109-amino-acid polypeptide reads, in one-letter code: MDVEEIKRKKLLELQKKLAEQQQQEEALLEAEMQKRALLRKILTPEARERLERIRLARPEFAEAVEVQLIQLAQLGRLPIPLSDEDFKALLERISALTKRKREIKIVRK.

Belongs to the PDCD5 family.

The sequence is that of DNA-binding protein MJ0691 from Methanocaldococcus jannaschii (strain ATCC 43067 / DSM 2661 / JAL-1 / JCM 10045 / NBRC 100440) (Methanococcus jannaschii).